Reading from the N-terminus, the 346-residue chain is GTPase Obg (346 aa).

The region spanning 1–158 (MKFLDQVKIY…RAIWLRLKLI (158 aa)) is the Obg domain. One can recognise an OBG-type G domain in the interval 159-327 (ADVGLVGLPN…LLREAFALVR (169 aa)). Residues 165–172 (GLPNAGKS), 190–194 (FTTLA), 212–215 (DIPG), 279–282 (NKID), and 308–310 (SGF) contribute to the GTP site. Ser172 and Thr192 together coordinate Mg(2+).

The protein belongs to the TRAFAC class OBG-HflX-like GTPase superfamily. OBG GTPase family. In terms of assembly, monomer. Mg(2+) serves as cofactor.

Its subcellular location is the cytoplasm. Its function is as follows. An essential GTPase which binds GTP, GDP and possibly (p)ppGpp with moderate affinity, with high nucleotide exchange rates and a fairly low GTP hydrolysis rate. Plays a role in control of the cell cycle, stress response, ribosome biogenesis and in those bacteria that undergo differentiation, in morphogenesis control. In Phenylobacterium zucineum (strain HLK1), this protein is GTPase Obg.